Reading from the N-terminus, the 415-residue chain is Gamma-glutamyl phosphate reductase (415 aa).

The protein belongs to the gamma-glutamyl phosphate reductase family.

Its subcellular location is the cytoplasm. The enzyme catalyses L-glutamate 5-semialdehyde + phosphate + NADP(+) = L-glutamyl 5-phosphate + NADPH + H(+). The protein operates within amino-acid biosynthesis; L-proline biosynthesis; L-glutamate 5-semialdehyde from L-glutamate: step 2/2. Catalyzes the NADPH-dependent reduction of L-glutamate 5-phosphate into L-glutamate 5-semialdehyde and phosphate. The product spontaneously undergoes cyclization to form 1-pyrroline-5-carboxylate. This Psychromonas ingrahamii (strain DSM 17664 / CCUG 51855 / 37) protein is Gamma-glutamyl phosphate reductase.